Reading from the N-terminus, the 436-residue chain is UPF0597 protein YhaM (436 aa).

This sequence belongs to the UPF0597 family.

The chain is UPF0597 protein YhaM from Salmonella newport (strain SL254).